Consider the following 871-residue polypeptide: Speckle targeted PIP5K1A-regulated poly(A) polymerase (871 aa).

A Matrin-type zinc finger spans residues 16–46; sequence FRCCLCHITTANQPSLDAHLGGRKHRHLVEL. The RRM domain occupies 56 to 128; it reads RSVFVSGFPR…RRLRVRPREQ (73 aa). Position 205 (S205) interacts with ATP. Mg(2+) is bound by residues D216 and D218. UTP contacts are provided by D216 and D218. A disordered region spans residues 252–321; the sequence is QALACTPASP…QEDQGDGDQG (70 aa). The segment covering 259–269 has biased composition (pro residues); it reads ASPPDSQPPAS. ATP is bound at residue N392. N392, R414, Y432, and H547 together coordinate UTP. The PAP-associated domain maps to 489 to 547; it reads LSSLLAQFFSCVSCWDLRGSLLSLREGQALSVAGGLPSNLSEGLRLGPMNLQDPFDLSH. The interval 596 to 871 is KA1; binds the bulging loops of U6 snRNA but is dispensable for terminal uridylyltransferase activity; it reads SSPSSILSAT…LPQALRNLLK (276 aa). Residues 636–684 form a disordered region; sequence GTKRLRSEGGGPGEPPQGGTSKRAKLDGQKKSCEEGPEEQQGCAGEHGE. The span at 659–669 shows a compositional bias: basic and acidic residues; sequence AKLDGQKKSCE. Residue S748 is modified to Phosphoserine.

The protein belongs to the DNA polymerase type-B-like family. As to quaternary structure, associates with the cleavage and polyadenylation specificity factor (CPSF) complex. Interacts with CPSF1 and CPSF3; the interaction is direct. Interacts with PIP5K1A. Mg(2+) is required as a cofactor. Requires Mn(2+) as cofactor. In terms of processing, phosphorylated by CK1 in the proline-rich (Pro-rich) region.

It localises to the nucleus. Its subcellular location is the nucleolus. The protein localises to the nucleus speckle. It catalyses the reaction RNA(n) + UTP = RNA(n)-3'-uridine ribonucleotide + diphosphate. The catalysed reaction is RNA(n) + ATP = RNA(n)-3'-adenine ribonucleotide + diphosphate. Its activity is regulated as follows. Adenylyltransferase activity is specifically phosphatidylinositol 4,5-bisphosphate (PtdIns(4,5)P2). Functionally, poly(A) polymerase that creates the 3'-poly(A) tail of specific pre-mRNAs. Localizes to nuclear speckles together with PIP5K1A and mediates polyadenylation of a select set of mRNAs, such as HMOX1. In addition to polyadenylation, it is also required for the 3'-end cleavage of pre-mRNAs: binds to the 3'UTR of targeted pre-mRNAs and promotes the recruitment and assembly of the CPSF complex on the 3'UTR of pre-mRNAs. In addition to adenylyltransferase activity, also has uridylyltransferase activity. However, the ATP ratio is higher than UTP in cells, suggesting that it functions primarily as a poly(A) polymerase. Acts as a specific terminal uridylyltransferase for U6 snRNA in vitro: responsible for a controlled elongation reaction that results in the restoration of the four 3'-terminal UMP-residues found in newly transcribed U6 snRNA. Not involved in replication-dependent histone mRNA degradation. The protein is Speckle targeted PIP5K1A-regulated poly(A) polymerase (TUT1) of Bos taurus (Bovine).